The chain runs to 123 residues: Putative oocyte-secreted protein 1 homolog (123 aa).

A signal peptide spans 1–26; sequence MKTILGFKGLFYLHSLIWTCAGDWSA.

Belongs to the PLAC1 family.

It is found in the secreted. May be involved in cell differentiation. In Homo sapiens (Human), this protein is Putative oocyte-secreted protein 1 homolog (OOSP1).